The following is a 273-amino-acid chain: Phosphate import ATP-binding protein PstB (273 aa).

In terms of domain architecture, ABC transporter spans 27–268 (VTVRNLNFYY…PSDRRTQDYI (242 aa)). 59-66 (GPSGCGKS) contacts ATP.

Belongs to the ABC transporter superfamily. Phosphate importer (TC 3.A.1.7) family. As to quaternary structure, the complex is composed of two ATP-binding proteins (PstB), two transmembrane proteins (PstC and PstA) and a solute-binding protein (PstS).

The protein localises to the cell inner membrane. It carries out the reaction phosphate(out) + ATP + H2O = ADP + 2 phosphate(in) + H(+). Functionally, part of the ABC transporter complex PstSACB involved in phosphate import. Responsible for energy coupling to the transport system. The chain is Phosphate import ATP-binding protein PstB from Bradyrhizobium diazoefficiens (strain JCM 10833 / BCRC 13528 / IAM 13628 / NBRC 14792 / USDA 110).